Reading from the N-terminus, the 397-residue chain is MIIKPRVRGFICVTTHPAGCAASVREQIAYVARRGPIERGPKKVLVIGASTGYGLAARIAAAFGAGAATLGVFFERAPADAKPGTAGWYNSAAFHDEAAARGLQATSVNGDAFSDEIKHKTIDAIRRDLGQVDLVVYSAAAPRRTHPKTGVTHQSTLKPIGHAVRLRGIDTDNEAIKETLLQPATPDEIADTVAVMGGEDWRMWIDALDAAGVLADGAKTTAFTYLGEQVTHDIYWNGSIGEAKKDLDRTVLALRGKLAARGGDARVSVLKAVVTQASSAIPMMPLYLSLLFKVMKARGTHEGCIEQVDGLLRDSLYGAQPHVDAEGRLRADRLELDPAVQARVLELWDQVTDDNLYTLTDFAGYKAEFLRLFGFGIDGVDYDAPVEPNVRIPNLIE.

Residues 48 to 53, 74 to 75, 111 to 112, and 139 to 140 contribute to the NAD(+) site; these read GASTGY, FE, DA, and AA. Tyr-225 contributes to the substrate binding site. The active-site Proton donor is the Tyr-235. Residues Lys-244 and 273–275 each bind NAD(+); that span reads VVT.

Belongs to the TER reductase family. As to quaternary structure, monomer.

The enzyme catalyses a 2,3-saturated acyl-[ACP] + NAD(+) = a (2E)-enoyl-[ACP] + NADH + H(+). The protein operates within lipid metabolism; fatty acid biosynthesis. Involved in the final reduction of the elongation cycle of fatty acid synthesis (FAS II). Catalyzes the reduction of a carbon-carbon double bond in an enoyl moiety that is covalently linked to an acyl carrier protein (ACP). The protein is Enoyl-[acyl-carrier-protein] reductase [NADH] of Burkholderia pseudomallei (strain 1710b).